We begin with the raw amino-acid sequence, 756 residues long: 5-methyltetrahydropteroyltriglutamate--homocysteine methyltransferase (756 aa).

5-methyltetrahydropteroyltri-L-glutamate is bound by residues 16 to 19 (RELK) and lysine 116. Residues 433 to 435 (IGS) and glutamate 486 each bind L-homocysteine. L-methionine is bound by residues 433–435 (IGS) and glutamate 486. 5-methyltetrahydropteroyltri-L-glutamate-binding positions include 517-518 (RC) and tryptophan 563. Aspartate 601 serves as a coordination point for L-homocysteine. Aspartate 601 provides a ligand contact to L-methionine. Glutamate 607 is a 5-methyltetrahydropteroyltri-L-glutamate binding site. Zn(2+)-binding residues include histidine 643, cysteine 645, and glutamate 667. Histidine 696 functions as the Proton donor in the catalytic mechanism. Zn(2+) is bound at residue cysteine 728.

It belongs to the vitamin-B12 independent methionine synthase family. It depends on Zn(2+) as a cofactor.

The catalysed reaction is 5-methyltetrahydropteroyltri-L-glutamate + L-homocysteine = tetrahydropteroyltri-L-glutamate + L-methionine. It functions in the pathway amino-acid biosynthesis; L-methionine biosynthesis via de novo pathway; L-methionine from L-homocysteine (MetE route): step 1/1. Functionally, catalyzes the transfer of a methyl group from 5-methyltetrahydrofolate to homocysteine resulting in methionine formation. The sequence is that of 5-methyltetrahydropteroyltriglutamate--homocysteine methyltransferase from Buchnera aphidicola subsp. Baizongia pistaciae (strain Bp).